The following is a 110-amino-acid chain: MEVLAKHRFARTSAQKARLVADQIRGLPVSKALEILTFSPKKAAVLVKKVLDSAIANAEHNEGADIDELKVGAVFVDEGPTMKRIMPRAKGRADRIMKRTSHITVVVADR.

Belongs to the universal ribosomal protein uL22 family. As to quaternary structure, part of the 50S ribosomal subunit.

In terms of biological role, this protein binds specifically to 23S rRNA; its binding is stimulated by other ribosomal proteins, e.g. L4, L17, and L20. It is important during the early stages of 50S assembly. It makes multiple contacts with different domains of the 23S rRNA in the assembled 50S subunit and ribosome. Its function is as follows. The globular domain of the protein is located near the polypeptide exit tunnel on the outside of the subunit, while an extended beta-hairpin is found that lines the wall of the exit tunnel in the center of the 70S ribosome. In Shewanella frigidimarina (strain NCIMB 400), this protein is Large ribosomal subunit protein uL22.